Here is a 354-residue protein sequence, read N- to C-terminus: 4-hydroxy-3-methylbut-2-en-1-yl diphosphate synthase (flavodoxin) (354 aa).

The [4Fe-4S] cluster site is built by Cys265, Cys268, Cys300, and Glu307.

It belongs to the IspG family. Requires [4Fe-4S] cluster as cofactor.

It carries out the reaction (2E)-4-hydroxy-3-methylbut-2-enyl diphosphate + oxidized [flavodoxin] + H2O + 2 H(+) = 2-C-methyl-D-erythritol 2,4-cyclic diphosphate + reduced [flavodoxin]. Its pathway is isoprenoid biosynthesis; isopentenyl diphosphate biosynthesis via DXP pathway; isopentenyl diphosphate from 1-deoxy-D-xylulose 5-phosphate: step 5/6. Functionally, converts 2C-methyl-D-erythritol 2,4-cyclodiphosphate (ME-2,4cPP) into 1-hydroxy-2-methyl-2-(E)-butenyl 4-diphosphate. This is 4-hydroxy-3-methylbut-2-en-1-yl diphosphate synthase (flavodoxin) from Hydrogenobaculum sp. (strain Y04AAS1).